Reading from the N-terminus, the 201-residue chain is Peptidyl-tRNA hydrolase (201 aa).

Position 14 (Tyr-14) interacts with tRNA. The active-site Proton acceptor is the His-19. TRNA is bound by residues Tyr-64, Asn-66, and Asn-112.

Belongs to the PTH family. As to quaternary structure, monomer.

The protein resides in the cytoplasm. The catalysed reaction is an N-acyl-L-alpha-aminoacyl-tRNA + H2O = an N-acyl-L-amino acid + a tRNA + H(+). Hydrolyzes ribosome-free peptidyl-tRNAs (with 1 or more amino acids incorporated), which drop off the ribosome during protein synthesis, or as a result of ribosome stalling. Its function is as follows. Catalyzes the release of premature peptidyl moieties from peptidyl-tRNA molecules trapped in stalled 50S ribosomal subunits, and thus maintains levels of free tRNAs and 50S ribosomes. This Bradyrhizobium diazoefficiens (strain JCM 10833 / BCRC 13528 / IAM 13628 / NBRC 14792 / USDA 110) protein is Peptidyl-tRNA hydrolase.